A 282-amino-acid chain; its full sequence is Transcription factor HES-1 (282 aa).

The interval 1–44 is disordered; it reads MPADIMEKNSSSPVAATPASVNTTPDKPKTASEHRKSSKPIMEK. The span at 10–21 shows a compositional bias: low complexity; it reads SSSPVAATPASV. Basic and acidic residues predominate over residues 26 to 35; it reads DKPKTASEHR. Residues 34-91 form the bHLH domain; that stretch reads HRKSSKPIMEKRRRARINESLSQLKTLILDALKKDSSRHSKLEKADILEMTVKHLRNL. Residues 110 to 143 form the Orange domain; that stretch reads YRAGFSECMNEVTRFLSTCEGVNTEVRTRLLGHL. 2 disordered regions span residues 158–204 and 256–282; these read QAHP…GSAP and TSVG…PWRN. 2 stretches are compositionally biased toward pro residues: residues 164 to 174 and 182 to 202; these read QAPPPPPPSGP and FAPP…PPGS. Low complexity predominate over residues 264–275; it reads SPSSGSSLTSDS. Residues 277 to 280 carry the WRPW motif motif; the sequence is WRPW.

Interacts with SIRT1. Transcription repression requires formation of a complex with a corepressor protein of the Groucho/TLE family. Interacts (via WPRW motif) with TLE1, and more weakly with TLE2. Interacts with HES6. Interacts with an FA complex, composed of FANCA, FANCF, FANCG and FANCL, but not of FANCC, nor FANCE. As to expression, expressed at high levels in undifferentiated neural precursor cells, but the level of expression decreases as neural differentiation proceeds.

It localises to the nucleus. In terms of biological role, transcriptional repressor of genes that require a bHLH protein for their transcription. May act as a negative regulator of myogenesis by inhibiting the functions of MYOD1 and ASH1. Binds DNA on N-box motifs: 5'-CACNAG-3' with high affinity and on E-box motifs: 5'-CANNTG-3' with low affinity. May play a role in a functional FA core complex response to DNA cross-link damage, being required for the stability and nuclear localization of FA core complex proteins, as well as for FANCD2 monoubiquitination in response to DNA damage. The polypeptide is Transcription factor HES-1 (Hes1) (Mus musculus (Mouse)).